The primary structure comprises 857 residues: Linoleate 9S-lipoxygenase 6 (857 aa).

Residues 26 to 156 enclose the PLAT domain; the sequence is NALDFTDLAG…RYKSDRIFFA (131 aa). One can recognise a Lipoxygenase domain in the interval 159-857; that stretch reads PYLPSETPEL…GKGIPNSVSI (699 aa). Residues 205-243 form a disordered region; sequence NPDQGEQNVRTTLGGSADYPYPRRGRTGRPPTRTDPKSE. Residues 208 to 218 show a composition bias toward polar residues; that stretch reads QGEQNVRTTLG. Residues histidine 518, histidine 523, histidine 709, asparagine 713, and isoleucine 857 each contribute to the Fe cation site.

Belongs to the lipoxygenase family. As to quaternary structure, monomer. Fe cation is required as a cofactor. In terms of tissue distribution, expressed in tubers and roots. Detected in leaves, petioles and stems.

Its subcellular location is the cytoplasm. The catalysed reaction is (9Z,12Z)-octadecadienoate + O2 = (9S)-hydroperoxy-(10E,12Z)-octadecadienoate. It functions in the pathway lipid metabolism; oxylipin biosynthesis. Its function is as follows. Plant lipoxygenases may be involved in a number of diverse aspects of plant physiology including growth and development, pest resistance, and senescence or responses to wounding. Catalyzes the hydroperoxidation of lipids containing a cis,cis-1,4-pentadiene structure. Linoleic and linolenic acids are the preferred substrates, but is also active with arachidonic acid. The products are almost exclusively the S enantiomers. The chain is Linoleate 9S-lipoxygenase 6 (LOX1.6) from Solanum tuberosum (Potato).